The following is a 359-amino-acid chain: Putative ankyrin repeat protein R190 (359 aa).

7 ANK repeats span residues 72–103 (RLMEIYHKMIIIDNNMDLLDLLFEIMSDDFRC), 105–133 (DCVILDLAIRHQRTDVFNKYIILGFDLNR), 142–173 (DEIILWYHQIKKYDTGIELCDYLIDNGASISI), 203–234 (LGNLLFWYLRNYYNVNIDIVETILSNGIDINN), 236–260 (HEYSYMLIGKFNVPIMNLFIRYGLI), 261–287 (IHDDVIDDACRYGNHLLVDYLMEIGHK), and 288–317 (PSKQIITNVIENHNVNIIKLFVKYNIDLSD).

This is Putative ankyrin repeat protein R190 from Acanthamoeba polyphaga (Amoeba).